We begin with the raw amino-acid sequence, 353 residues long: Tetraacyldisaccharide 4'-kinase (353 aa).

49–56 is an ATP binding site; that stretch reads TAGGTGKT.

It belongs to the LpxK family.

The catalysed reaction is a lipid A disaccharide + ATP = a lipid IVA + ADP + H(+). Its pathway is glycolipid biosynthesis; lipid IV(A) biosynthesis; lipid IV(A) from (3R)-3-hydroxytetradecanoyl-[acyl-carrier-protein] and UDP-N-acetyl-alpha-D-glucosamine: step 6/6. Functionally, transfers the gamma-phosphate of ATP to the 4'-position of a tetraacyldisaccharide 1-phosphate intermediate (termed DS-1-P) to form tetraacyldisaccharide 1,4'-bis-phosphate (lipid IVA). This is Tetraacyldisaccharide 4'-kinase from Chlorobium phaeovibrioides (strain DSM 265 / 1930) (Prosthecochloris vibrioformis (strain DSM 265)).